Reading from the N-terminus, the 243-residue chain is MTEPNNTDLLDLATPYALHAVSIDERFEIDRWLATAPPEVADAFTDEVRSVQETMAVLSAATATEPPAHLRDNVLAMVADDPVRDLGSARRRRGGESRWRTAVLAAAAVAVVGLGALGVGLALRPAVSPTTADQVFAAPDVQTVSGPIPGGGTATVVFSKERDAGVLVMNDVAPPKPGTVYQMWLVGSDGPHSAGTMDDKAISPSTTAVLSDIGTSQALAFTVEPPGGSQRPTSPAFAELPLT.

Over 1 to 102 (MTEPNNTDLL…RGGESRWRTA (102 aa)) the chain is Cytoplasmic. The chain crosses the membrane as a helical span at residues 103 to 123 (VLAAAAVAVVGLGALGVGLAL). Topologically, residues 124-243 (RPAVSPTTAD…SPAFAELPLT (120 aa)) are extracellular. The segment at 223 to 243 (VEPPGGSQRPTSPAFAELPLT) is disordered.

It belongs to the anti-sigma-K factor family.

The protein resides in the cell membrane. Its function is as follows. An anti-sigma factor for extracytoplasmic function (ECF) sigma factor SigK. ECF sigma factors are held in an inactive form by an anti-sigma factor until released by regulated intramembrane proteolysis (RIP). RIP occurs when an extracytoplasmic signal triggers a concerted proteolytic cascade to transmit information and elicit cellular responses. The membrane-spanning regulatory substrate protein is first cut extracytoplasmically (site-1 protease, S1P), then within the membrane itself (site-2 protease, S2P, Rip1), while cytoplasmic proteases finish degrading the regulatory protein, liberating the sigma factor. The polypeptide is Anti-sigma-K factor RskA (rskA) (Mycobacterium sp. (strain JLS)).